A 510-amino-acid polypeptide reads, in one-letter code: MKLKGSLACLLLFLLLGSGEASPLQSGEENTREEVGEAIGHGVGEALGDVLGEAAIHGIEKAIGQGTGKTEGLGIREARDPHLGDALAHKLKEASHALKNTGSEADRQAENIIGHGVDPAHKSWQGTPGSNGAWGTNGQPPSGGHGIPGSQGSSGGPGDTQDQVFSGGSGGSFGANAQGGSWGQGGHRGAFNLGANSQGTSPQPGSVRSNNNRNTECTTPPGSGGSSGNSGGSSSSGSSTNGGGSSGGSNGGSNGSTSSNSGSSNGGGSSNSGGSNGGGSNGGGSSNGGGSNAGSSGSSGSSSDTRNSDHGGSSQGYNPSPSSGSRVGSGVRNKPECDNPHVSGGSGGQGQGSSGEGEAVSGINTLNSQTSSESFNFDTFWKNFKSKLGFINWDALNKGQAPPPSTRALLYFRRLWEDFKHNTPFLNWKVITEGEDLPSLQKRAGGAGQPGTGWQDAVAGTAKNYNYNQQGPPAALGGQYPAKTPAKGGVTVSSSASRTYPGLLQWVKFW.

The first 21 residues, 1–21, serve as a signal peptide directing secretion; it reads MKLKGSLACLLLFLLLGSGEA. Positions 117–362 are disordered; it reads VDPAHKSWQG…SSGEGEAVSG (246 aa). Polar residues predominate over residues 124–137; that stretch reads WQGTPGSNGAWGTN. The segment covering 141–158 has biased composition (gly residues); that stretch reads PSGGHGIPGSQGSSGGPG. The segment covering 194 to 221 has biased composition (polar residues); sequence GANSQGTSPQPGSVRSNNNRNTECTTPP. Gly residues-rich tracts occupy residues 222–231, 240–254, and 264–292; these read GSGGSSGNSG, TNGG…GGSN, and SNGG…GGSN. 2 stretches are compositionally biased toward low complexity: residues 293–303 and 319–332; these read AGSSGSSGSSS and PSPS…SGVR. A compositionally biased stretch (gly residues) spans 344–355; it reads GGSGGQGQGSSG.

Belongs to the dermokine family. In terms of assembly, homooligomer. Seems to be able to homodimerize and homotrimerize. In terms of processing, O-glycosylated.

The protein localises to the secreted. Its function is as follows. May act as a soluble regulator of keratinocyte differentiation. The polypeptide is Dermokine (DMKN) (Bos taurus (Bovine)).